We begin with the raw amino-acid sequence, 101 residues long: Apolipoprotein C-II (101 aa).

Residues 1–22 form the signal peptide; it reads MGIRYLLVLVLVLLVLGCEVQG. Residues 23 to 28 constitute a propeptide that is removed on maturation; sequence AHMPQQ. Residues 66–74 are lipid binding; that stretch reads TMDEKIREI. A lipoprotein lipase cofactor region spans residues 78–101; that stretch reads STAAVSTYAGIFTDQLLSMLKGDQ.

The protein belongs to the apolipoprotein C2 family. In terms of processing, proapolipoprotein C-II is synthesized as a sialic acid containing glycoprotein which is subsequently desialylated prior to its proteolytic processing. Post-translationally, proapolipoprotein C-II, the major form found in plasma undergoes proteolytic cleavage of its N-terminal hexapeptide to generate apolipoprotein C-II, which occurs as the minor form in plasma.

The protein localises to the secreted. Component of chylomicrons, very low-density lipoproteins (VLDL), low-density lipoproteins (LDL), and high-density lipoproteins (HDL) in plasma. Plays an important role in lipoprotein metabolism as an activator of lipoprotein lipase. Both proapolipoprotein C-II and apolipoprotein C-II can activate lipoprotein lipase. The protein is Apolipoprotein C-II (APOC2) of Neomonachus schauinslandi (Hawaiian monk seal).